A 78-amino-acid chain; its full sequence is UPF0291 protein SE_1024 (78 aa).

The tract at residues 53 to 78 is disordered; it reads TKVIDPEGNDVTPEKLKKIQEEKHNK. A compositionally biased stretch (basic and acidic residues) spans 64 to 78; the sequence is TPEKLKKIQEEKHNK.

It belongs to the UPF0291 family.

It localises to the cytoplasm. The chain is UPF0291 protein SE_1024 from Staphylococcus epidermidis (strain ATCC 12228 / FDA PCI 1200).